The chain runs to 586 residues: MSSSSLVTSLLFSSSSSSNTATSTSSRRSFSLFSKNQYCKPSPLRRSSSLLLVRCSLQQQQEEKAAPAAESHHAGGGQDDAATASHHAVEGENGVADADGGGVKKSKEELEEEEQQEVDWRSDEEFKRFMGNPSIEGAIKLEKKRADRKLRELDREPDANPLAGLLRGLARGQLAREKERLELAENTFKALDLNKLKSCFGYDTFFAVDVRRFGDGGIFIGNLRKPVEEVRPKLEKKIAEAAGTDVTLWFMEEKNDDITKQVCMVQPKAEIDLQLEITKLSTPWGYLSAVALAVTTFGTIAIMSGFFLKPGATFDDYVSDVLPLFAGFLSILGVSEIATRLTAARYGVKLSPSFLVPSNWTGCLGVMNNYESLLPNKKALFDIPVARAASAYLTSVALAVSAFVSDGSLNGGKNALFVRPEFFYNNPLLSFVQAVIGPYADELGNVLPNAVEGVGVPVDPLAFAGLLGIVVTSLNLLPCGRLEGGRIAQALFGRGAAAVLSFATSVALGAGAIIGGSVLCLAWGLFATFVRGGEEIPAQDEITPLGSERYAWGLVLAVVCLLTLFPNGGGTYSSDFLGAPFFRGGI.

A chloroplast-targeting transit peptide spans 1 to 54; it reads MSSSSLVTSLLFSSSSSSNTATSTSSRRSFSLFSKNQYCKPSPLRRSSSLLLVR. Positions 62 to 73 are enriched in basic and acidic residues; it reads EEKAAPAAESHH. Residues 62-118 are disordered; sequence EEKAAPAAESHHAGGGQDDAATASHHAVEGENGVADADGGGVKKSKEELEEEEQQEV. Positions 103–195 form a coiled coil; sequence VKKSKEELEE…NTFKALDLNK (93 aa). 7 consecutive transmembrane segments (helical) span residues 287–307, 318–338, 389–409, 427–447, 454–474, 506–526, and 550–570; these read LSAV…SGFF, VSDV…SEIA, ASAY…DGSL, PLLS…GNVL, VGVP…VTSL, VALG…WGLF, and YAWG…NGGG.

Belongs to the peptidase M50B family.

The protein localises to the plastid. It localises to the chloroplast membrane. Functionally, probable membrane-associated metalloprotease that may be involved in chloroplast development. In Oryza sativa subsp. indica (Rice), this protein is Probable zinc metalloprotease EGY3, chloroplastic (EGY3).